Consider the following 513-residue polypeptide: Coiled-coil domain-containing protein 102B (513 aa).

Residues 1–217 (MNLDSIHRLI…IDSLKLSEEM (217 aa)) form a required for centriolar localization and for interaction with CEP250, CROCC, LRRC45 and NEK2 region. A phosphoserine mark is found at S21, S22, S34, S135, S142, S194, and S210. Positions 72-142 (ELRLRELEEV…ELSTLKKKQS (71 aa)) form a coiled coil. Coiled-coil stretches lie at residues 268–337 (QKIL…ESKS) and 363–513 (WDKR…LQNW). Phosphoserine is present on residues S401, S404, and S406. A disordered region spans residues 493 to 513 (LDEEKERNENLETELRHLQNW).

As to quaternary structure, interacts (via N-terminus) with centriolar protein CEP250/CNAP1; the interaction results in recruitment of CCDC102B to the proximal ends of centrioles. Interacts (via N-terminus) with CROCC/rootletin and LRRC45. Interacts (via N-terminus) with serine/threonine-protein kinase NEK2; the interaction results in phosphorylation of CCDC102B. In terms of processing, phosphorylated directly or indirectly by NEK2 during mitosis which causes dissociation of CCDC102B from the centrosome and allows for centrosome separation.

The protein localises to the cytoplasm. The protein resides in the cytoskeleton. Its subcellular location is the microtubule organizing center. It localises to the centrosome. It is found in the centriole. During interphase, forms fibers at the proximal ends of centrioles to maintain centrosome cohesion. During mitosis, dissociates from the centrosome following phosphorylation to allow centrosome separation. Contributes to CROCC/rootletin filament formation. This is Coiled-coil domain-containing protein 102B (CCDC102B) from Homo sapiens (Human).